A 411-amino-acid chain; its full sequence is Serine--tRNA ligase (411 aa).

T226–E228 contacts L-serine. ATP is bound at residue R257–E259. An L-serine-binding site is contributed by E280. E344–S347 contributes to the ATP binding site. S379 serves as a coordination point for L-serine.

The protein belongs to the class-II aminoacyl-tRNA synthetase family. Type-1 seryl-tRNA synthetase subfamily. As to quaternary structure, homodimer. The tRNA molecule binds across the dimer.

The protein localises to the cytoplasm. The catalysed reaction is tRNA(Ser) + L-serine + ATP = L-seryl-tRNA(Ser) + AMP + diphosphate + H(+). It catalyses the reaction tRNA(Sec) + L-serine + ATP = L-seryl-tRNA(Sec) + AMP + diphosphate + H(+). Its pathway is aminoacyl-tRNA biosynthesis; selenocysteinyl-tRNA(Sec) biosynthesis; L-seryl-tRNA(Sec) from L-serine and tRNA(Sec): step 1/1. Catalyzes the attachment of serine to tRNA(Ser). Is also able to aminoacylate tRNA(Sec) with serine, to form the misacylated tRNA L-seryl-tRNA(Sec), which will be further converted into selenocysteinyl-tRNA(Sec). The chain is Serine--tRNA ligase from Campylobacter jejuni subsp. jejuni serotype O:23/36 (strain 81-176).